We begin with the raw amino-acid sequence, 247 residues long: Small ribosomal subunit protein uS2 (247 aa).

Belongs to the universal ribosomal protein uS2 family.

This chain is Small ribosomal subunit protein uS2, found in Pseudomonas syringae pv. tomato (strain ATCC BAA-871 / DC3000).